The following is an 874-amino-acid chain: Alanine--tRNA ligase (874 aa).

Zn(2+)-binding residues include H564, H568, C665, and H669.

This sequence belongs to the class-II aminoacyl-tRNA synthetase family. Zn(2+) is required as a cofactor.

Its subcellular location is the cytoplasm. It carries out the reaction tRNA(Ala) + L-alanine + ATP = L-alanyl-tRNA(Ala) + AMP + diphosphate. Catalyzes the attachment of alanine to tRNA(Ala) in a two-step reaction: alanine is first activated by ATP to form Ala-AMP and then transferred to the acceptor end of tRNA(Ala). Also edits incorrectly charged Ser-tRNA(Ala) and Gly-tRNA(Ala) via its editing domain. This is Alanine--tRNA ligase from Burkholderia cenocepacia (strain HI2424).